Reading from the N-terminus, the 267-residue chain is Glucosamine-6-phosphate deaminase (267 aa).

Catalysis depends on Asp72, which acts as the Proton acceptor; for enolization step. Asp141 (for ring-opening step) is an active-site residue. His143 serves as the catalytic Proton acceptor; for ring-opening step. Glu148 serves as the catalytic For ring-opening step.

The protein belongs to the glucosamine/galactosamine-6-phosphate isomerase family. NagB subfamily. Homohexamer.

The enzyme catalyses alpha-D-glucosamine 6-phosphate + H2O = beta-D-fructose 6-phosphate + NH4(+). It participates in amino-sugar metabolism; N-acetylneuraminate degradation; D-fructose 6-phosphate from N-acetylneuraminate: step 5/5. With respect to regulation, allosterically activated by N-acetylglucosamine 6-phosphate (GlcNAc6P). In terms of biological role, catalyzes the reversible isomerization-deamination of glucosamine 6-phosphate (GlcN6P) to form fructose 6-phosphate (Fru6P) and ammonium ion. This Haemophilus ducreyi (strain 35000HP / ATCC 700724) protein is Glucosamine-6-phosphate deaminase.